The primary structure comprises 596 residues: Arginine--tRNA ligase (596 aa).

A 'HIGH' region motif is present at residues 135-145; sequence ANPTGPIHIGG. The tract at residues 227-249 is disordered; the sequence is PRVDGGADQDGNPLGEGDSEQRE.

This sequence belongs to the class-I aminoacyl-tRNA synthetase family. Monomer.

Its subcellular location is the cytoplasm. It catalyses the reaction tRNA(Arg) + L-arginine + ATP = L-arginyl-tRNA(Arg) + AMP + diphosphate. The sequence is that of Arginine--tRNA ligase from Bifidobacterium adolescentis (strain ATCC 15703 / DSM 20083 / NCTC 11814 / E194a).